We begin with the raw amino-acid sequence, 378 residues long: Putative zinc finger protein 302L (378 aa).

A C2H2-type; degenerate zinc finger spans residues 3–25; that stretch reads IVCEFCDKSFDSKSKVNAHQRTK.

The protein belongs to the IIV-6 302L family.

In Invertebrate iridescent virus 6 (IIV-6), this protein is Putative zinc finger protein 302L.